The chain runs to 637 residues: tRNA 5-methylaminomethyl-2-thiouridine biosynthesis bifunctional protein MnmC (637 aa).

Positions 1-231 (MPIDPARLAF…KRQMCRGRHR (231 aa)) are tRNA (mnm(5)s(2)U34)-methyltransferase. The tract at residues 250-637 (IGAGLAGSST…RPARGMTREG (388 aa)) is FAD-dependent cmnm(5)s(2)U34 oxidoreductase.

It in the N-terminal section; belongs to the methyltransferase superfamily. tRNA (mnm(5)s(2)U34)-methyltransferase family. This sequence in the C-terminal section; belongs to the DAO family. The cofactor is FAD.

The protein localises to the cytoplasm. The enzyme catalyses 5-aminomethyl-2-thiouridine(34) in tRNA + S-adenosyl-L-methionine = 5-methylaminomethyl-2-thiouridine(34) in tRNA + S-adenosyl-L-homocysteine + H(+). In terms of biological role, catalyzes the last two steps in the biosynthesis of 5-methylaminomethyl-2-thiouridine (mnm(5)s(2)U) at the wobble position (U34) in tRNA. Catalyzes the FAD-dependent demodification of cmnm(5)s(2)U34 to nm(5)s(2)U34, followed by the transfer of a methyl group from S-adenosyl-L-methionine to nm(5)s(2)U34, to form mnm(5)s(2)U34. The sequence is that of tRNA 5-methylaminomethyl-2-thiouridine biosynthesis bifunctional protein MnmC from Aromatoleum aromaticum (strain DSM 19018 / LMG 30748 / EbN1) (Azoarcus sp. (strain EbN1)).